The chain runs to 336 residues: uncharacterized protein (336 aa).

Positions 196–222 (YKEGDDSNWDDFGSESEDDSKEAHSEE) are disordered. Positions 201 to 215 (DSNWDDFGSESEDDS) are enriched in acidic residues. At Ser211 the chain carries Phosphoserine.

This is an uncharacterized protein from Schizosaccharomyces pombe (strain 972 / ATCC 24843) (Fission yeast).